The primary structure comprises 221 residues: Glycerol metabolism activator (221 aa).

The 118-residue stretch at 3-120 (KILIADDHPL…QMTDAIEQIL (118 aa)) folds into the Response regulatory domain. At Asp55 the chain carries 4-aspartylphosphate. Residues 149–214 (APELLQALTR…QAILSAGDID (66 aa)) enclose the HTH luxR-type domain. A DNA-binding region (H-T-H motif) is located at residues 173 to 192 (NKQIAYNLDIAETTVKAHVS).

Its function is as follows. Positive activator for glycerol metabolism. Regulates the expression of qedA in a positive manner and governs the expression of ADH I and ADH IIB. General regulator of quinoprotein ethanol oxidation and affects expression of ADH IIG activity but is not the sole regulator. This Pseudomonas putida (Arthrobacter siderocapsulatus) protein is Glycerol metabolism activator.